Reading from the N-terminus, the 541-residue chain is Protein wntless homolog (541 aa).

Residues 1–15 (MAGAIIENMGTKKLC) are Cytoplasmic-facing. The chain crosses the membrane as a helical span at residues 16–36 (IVGGILLVFQIIAFLVGGLIA). Over 37 to 232 (PGPTTAVSYM…GIHQNGGFTK (196 aa)) the chain is Lumenal. The interaction with Wnt proteins stretch occupies residues 101–232 (MEMSPWFQFM…GIHQNGGFTK (132 aa)). The chain crosses the membrane as a helical span at residues 233 to 253 (VWFAMKTFLTPSIFIIMVWYW). Topologically, residues 254–268 (RRITMMSRPPVLLEK) are cytoplasmic. A helical transmembrane segment spans residues 269 to 289 (VIFALGISMTFINIPVEWFSI). Over 290-303 (GFDWTWMLLFGDIR) the chain is Lumenal. A helical transmembrane segment spans residues 304-324 (QGIFYAMLLSFWIIFCGEHMM). Residues 325 to 331 (DQHERNH) lie on the Cytoplasmic side of the membrane. The helical transmembrane segment at 332-352 (IAGYWKQVGPIAVGSFCLFIF) threads the bilayer. Over 353–380 (DMCERGVQLTNPFYSIWTTDIGTELAMA) the chain is Lumenal. Residues 381-401 (FIIVAGICLCLYFLFLCFMVF) form a helical membrane-spanning segment. Topologically, residues 402-431 (QVFRNISGKQSSLPAMSKVRRLHYEGLIFR) are cytoplasmic. A helical transmembrane segment spans residues 432-452 (FKFLMLITLACAAMTVIFFIV). Residues 453 to 471 (SQVTEGHWKWGGVTVQVNS) lie on the Lumenal side of the membrane. Residues 472-492 (AFFTGIYGMWNLYVFALMFLY) traverse the membrane as a helical segment. At 493 to 541 (APSHKNYGEDQSNGDLGVHSGEELQLTTTITHVDGPTEIYKLTRKEAQE) the chain is on the cytoplasmic side.

It belongs to the wntless family. In terms of assembly, interacts with WNT3A. Interacts with WNT1, WNT3 and WNT5A.

Its subcellular location is the golgi apparatus membrane. The protein localises to the cytoplasmic vesicle membrane. The protein resides in the cell membrane. It is found in the endoplasmic reticulum membrane. It localises to the early endosome membrane. In terms of biological role, regulates Wnt proteins sorting and secretion in a feedback regulatory mechanism. This reciprocal interaction plays a key role in the regulation of expression, subcellular location, binding and organelle-specific association of Wnt proteins. Also plays an important role in establishment of the anterior-posterior body axis formation during development. This chain is Protein wntless homolog (WLS), found in Pongo abelii (Sumatran orangutan).